We begin with the raw amino-acid sequence, 93 residues long: UPF0473 protein BH1270 (93 aa).

The protein belongs to the UPF0473 family.

This is UPF0473 protein BH1270 from Halalkalibacterium halodurans (strain ATCC BAA-125 / DSM 18197 / FERM 7344 / JCM 9153 / C-125) (Bacillus halodurans).